A 238-amino-acid chain; its full sequence is Ribonuclease PH (238 aa).

Phosphate is bound by residues R86 and 124 to 126 (GTR).

It belongs to the RNase PH family. Homohexameric ring arranged as a trimer of dimers.

The enzyme catalyses tRNA(n+1) + phosphate = tRNA(n) + a ribonucleoside 5'-diphosphate. Its function is as follows. Phosphorolytic 3'-5' exoribonuclease that plays an important role in tRNA 3'-end maturation. Removes nucleotide residues following the 3'-CCA terminus of tRNAs; can also add nucleotides to the ends of RNA molecules by using nucleoside diphosphates as substrates, but this may not be physiologically important. Probably plays a role in initiation of 16S rRNA degradation (leading to ribosome degradation) during starvation. In Haemophilus influenzae (strain PittEE), this protein is Ribonuclease PH.